Consider the following 536-residue polypeptide: Membrane protein insertase YidC (536 aa).

A run of 4 helical transmembrane segments spans residues 5-25 (LIIA…IFPT), 353-373 (GNYG…FFPL), 418-438 (VNPL…FGLY), and 495-515 (MLML…GLVI).

This sequence belongs to the OXA1/ALB3/YidC family. Type 1 subfamily. Interacts with the Sec translocase complex via SecD. Specifically interacts with transmembrane segments of nascent integral membrane proteins during membrane integration.

The protein resides in the cell inner membrane. In terms of biological role, required for the insertion and/or proper folding and/or complex formation of integral membrane proteins into the membrane. Involved in integration of membrane proteins that insert both dependently and independently of the Sec translocase complex, as well as at least some lipoproteins. Aids folding of multispanning membrane proteins. This chain is Membrane protein insertase YidC, found in Geobacter sp. (strain M21).